The primary structure comprises 176 residues: ATP synthase subunit delta (176 aa).

Belongs to the ATPase delta chain family. F-type ATPases have 2 components, F(1) - the catalytic core - and F(0) - the membrane proton channel. F(1) has five subunits: alpha(3), beta(3), gamma(1), delta(1), epsilon(1). F(0) has three main subunits: a(1), b(2) and c(10-14). The alpha and beta chains form an alternating ring which encloses part of the gamma chain. F(1) is attached to F(0) by a central stalk formed by the gamma and epsilon chains, while a peripheral stalk is formed by the delta and b chains.

Its subcellular location is the cell inner membrane. F(1)F(0) ATP synthase produces ATP from ADP in the presence of a proton or sodium gradient. F-type ATPases consist of two structural domains, F(1) containing the extramembraneous catalytic core and F(0) containing the membrane proton channel, linked together by a central stalk and a peripheral stalk. During catalysis, ATP synthesis in the catalytic domain of F(1) is coupled via a rotary mechanism of the central stalk subunits to proton translocation. In terms of biological role, this protein is part of the stalk that links CF(0) to CF(1). It either transmits conformational changes from CF(0) to CF(1) or is implicated in proton conduction. In Nitratiruptor sp. (strain SB155-2), this protein is ATP synthase subunit delta.